Here is a 141-residue protein sequence, read N- to C-terminus: Hemoglobin subunit alpha (141 aa).

Positions 1–141 (VLSSKDKANI…VSTVLTSKYR (141 aa)) constitute a Globin domain. Ser-3 is subject to Phosphoserine. An N6-succinyllysine mark is found at Lys-7 and Lys-11. N6-acetyllysine; alternate is present on Lys-16. At Lys-16 the chain carries N6-succinyllysine; alternate. Tyr-24 is subject to Phosphotyrosine. Lys-40 carries the N6-succinyllysine modification. The residue at position 49 (Ser-49) is a Phosphoserine. His-58 contributes to the O2 binding site. His-87 provides a ligand contact to heme b. Ser-102 bears the Phosphoserine mark. The residue at position 108 (Thr-108) is a Phosphothreonine. A Phosphoserine modification is found at Ser-124. Phosphothreonine occurs at positions 134 and 137. The residue at position 138 (Ser-138) is a Phosphoserine.

This sequence belongs to the globin family. In terms of assembly, heterotetramer of two alpha chains and two beta chains. Red blood cells.

Involved in oxygen transport from the lung to the various peripheral tissues. Functionally, hemopressin acts as an antagonist peptide of the cannabinoid receptor CNR1. Hemopressin-binding efficiently blocks cannabinoid receptor CNR1 and subsequent signaling. The chain is Hemoglobin subunit alpha (HBA) from Vicugna pacos (Alpaca).